A 225-amino-acid chain; its full sequence is ATP phosphoribosyltransferase (225 aa).

It belongs to the ATP phosphoribosyltransferase family. Short subfamily. In terms of assembly, heteromultimer composed of HisG and HisZ subunits.

It is found in the cytoplasm. The enzyme catalyses 1-(5-phospho-beta-D-ribosyl)-ATP + diphosphate = 5-phospho-alpha-D-ribose 1-diphosphate + ATP. It participates in amino-acid biosynthesis; L-histidine biosynthesis; L-histidine from 5-phospho-alpha-D-ribose 1-diphosphate: step 1/9. Functionally, catalyzes the condensation of ATP and 5-phosphoribose 1-diphosphate to form N'-(5'-phosphoribosyl)-ATP (PR-ATP). Has a crucial role in the pathway because the rate of histidine biosynthesis seems to be controlled primarily by regulation of HisG enzymatic activity. The polypeptide is ATP phosphoribosyltransferase (Herminiimonas arsenicoxydans).